The sequence spans 436 residues: GTPase Der (436 aa).

2 EngA-type G domains span residues 4 to 167 (PTVA…PVEE) and 175 to 351 (IRFS…ESQN). GTP is bound by residues 10–17 (GRPNVGKS), 57–61 (DTGGI), 119–122 (NKVD), 181–188 (GRPNVGKS), 229–233 (DTAGM), and 294–297 (NKWD). The region spanning 352-436 (KRIPSAVLND…PINLIARKRK (85 aa)) is the KH-like domain.

This sequence belongs to the TRAFAC class TrmE-Era-EngA-EngB-Septin-like GTPase superfamily. EngA (Der) GTPase family. Associates with the 50S ribosomal subunit.

Its function is as follows. GTPase that plays an essential role in the late steps of ribosome biogenesis. This chain is GTPase Der, found in Streptococcus agalactiae serotype III (strain NEM316).